Reading from the N-terminus, the 117-residue chain is Large ribosomal subunit protein bL19 (117 aa).

The protein belongs to the bacterial ribosomal protein bL19 family.

This protein is located at the 30S-50S ribosomal subunit interface and may play a role in the structure and function of the aminoacyl-tRNA binding site. The polypeptide is Large ribosomal subunit protein bL19 (Photorhabdus laumondii subsp. laumondii (strain DSM 15139 / CIP 105565 / TT01) (Photorhabdus luminescens subsp. laumondii)).